A 185-amino-acid chain; its full sequence is dCTP deaminase, dUMP-forming (185 aa).

DCTP-binding positions include 99–104 (KSSIAR), aspartate 117, 125–127 (TLE), glutamine 146, tyrosine 159, lysine 166, and glutamine 170. The active-site Proton donor/acceptor is glutamate 127.

The protein belongs to the dCTP deaminase family. In terms of assembly, homotrimer.

The enzyme catalyses dCTP + 2 H2O = dUMP + NH4(+) + diphosphate. Its pathway is pyrimidine metabolism; dUMP biosynthesis; dUMP from dCTP: step 1/1. Functionally, bifunctional enzyme that catalyzes both the deamination of dCTP to dUTP and the hydrolysis of dUTP to dUMP without releasing the toxic dUTP intermediate. The polypeptide is dCTP deaminase, dUMP-forming (Methanospirillum hungatei JF-1 (strain ATCC 27890 / DSM 864 / NBRC 100397 / JF-1)).